The following is a 381-amino-acid chain: V-type proton ATPase subunit C 1-B (381 aa).

Thr-2 carries the N-acetylthreonine modification.

It belongs to the V-ATPase C subunit family. V-ATPase is a heteromultimeric enzyme made up of two complexes: the ATP-hydrolytic V1 complex and the proton translocation V0 complex. The V1 complex consists of three catalytic AB heterodimers that form a heterohexamer, three peripheral stalks each consisting of EG heterodimers, one central rotor including subunits D and F, and the regulatory subunits C and H. The proton translocation complex V0 consists of the proton transport subunit a, a ring of proteolipid subunits c9c'', rotary subunit d, subunits e and f, and two accessory subunits.

In terms of biological role, subunit of the V1 complex of vacuolar(H+)-ATPase (V-ATPase), a multisubunit enzyme composed of a peripheral complex (V1) that hydrolyzes ATP and a membrane integral complex (V0) that translocates protons. V-ATPase is responsible for acidifying and maintaining the pH of intracellular compartments and in some cell types, is targeted to the plasma membrane, where it is responsible for acidifying the extracellular environment. Subunit C is necessary for the assembly of the catalytic sector of the enzyme and is likely to have a specific function in its catalytic activity. This is V-type proton ATPase subunit C 1-B (atp6v1c1b) from Danio rerio (Zebrafish).